The chain runs to 187 residues: UPF0200 protein MM_1313 (187 aa).

9 to 16 serves as a coordination point for ATP; the sequence is GMPASGKS.

The protein belongs to the UPF0200 family.

The protein is UPF0200 protein MM_1313 of Methanosarcina mazei (strain ATCC BAA-159 / DSM 3647 / Goe1 / Go1 / JCM 11833 / OCM 88) (Methanosarcina frisia).